The sequence spans 527 residues: FHA domain-containing protein FhaA (527 aa).

At threonine 116 the chain carries Phosphothreonine. A disordered region spans residues 119 to 426; that stretch reads FRARGTVNPD…APGGYSGYGQ (308 aa). The segment covering 170–188 has biased composition (basic and acidic residues); that stretch reads RPDEYYDDRYARPQEDPRG. 2 stretches are compositionally biased toward low complexity: residues 199–209 and 256–266; these read RGGYPPETGGY and YQDQGRGYPDQ. The span at 271 to 283 shows a compositional bias: pro residues; that stretch reads YPPPYEQRPPVSP. Residues 284–299 are compositionally biased toward low complexity; that stretch reads GPAAGYGAPGYDQGYR. Over residues 300 to 322 the composition is skewed to gly residues; sequence QSGGYGPSPGGGQPGYGGYGEYG. The span at 345 to 366 shows a compositional bias: low complexity; it reads RPAYPDQGGYDQGYQQGATTYG. The FHA domain occupies 455–504; it reads NIIGRGQDAQFRLPDTGVSRRHLEIRWDGQVALLADLNSTNGTTVNNAPV.

In terms of assembly, interacts with (phosphorylated) MviN and (phosphorylated) PknB via the FHA domain. Binds to the PknB juxtamembrane domain with an affinity that is modulated by the degree and the pattern of phosphorylation of this juxtamembrane domain. Phosphorylated by PknB.

Its subcellular location is the cytoplasm. In terms of biological role, regulates cell growth and peptidoglycan synthesis by binding to MviN. May inhibit the late stages of peptidoglycan synthesis. The sequence is that of FHA domain-containing protein FhaA (fhaA) from Mycobacterium tuberculosis (strain ATCC 25618 / H37Rv).